An 84-amino-acid chain; its full sequence is NAD(P)H-quinone oxidoreductase subunit O (84 aa).

Belongs to the complex I NdhO subunit family. NDH-1 can be composed of about 15 different subunits; different subcomplexes with different compositions have been identified which probably have different functions.

It is found in the cellular thylakoid membrane. The catalysed reaction is a plastoquinone + NADH + (n+1) H(+)(in) = a plastoquinol + NAD(+) + n H(+)(out). It catalyses the reaction a plastoquinone + NADPH + (n+1) H(+)(in) = a plastoquinol + NADP(+) + n H(+)(out). NDH-1 shuttles electrons from an unknown electron donor, via FMN and iron-sulfur (Fe-S) centers, to quinones in the respiratory and/or the photosynthetic chain. The immediate electron acceptor for the enzyme in this species is believed to be plastoquinone. Couples the redox reaction to proton translocation, and thus conserves the redox energy in a proton gradient. Cyanobacterial NDH-1 also plays a role in inorganic carbon-concentration. The sequence is that of NAD(P)H-quinone oxidoreductase subunit O from Synechococcus sp. (strain CC9902).